The following is a 396-amino-acid chain: S-adenosylmethionine synthase (396 aa).

His16 contacts ATP. Asp18 is a Mg(2+) binding site. Glu44 lines the K(+) pocket. Residues Glu57 and Gln100 each contribute to the L-methionine site. The segment at 100–110 (QSPDIAQGVDR) is flexible loop. ATP is bound by residues 167–169 (DAK), 232–233 (RF), Asp241, 247–248 (RK), Ala264, and Lys268. Asp241 provides a ligand contact to L-methionine. Residue Lys272 participates in L-methionine binding.

Belongs to the AdoMet synthase family. Homotetramer; dimer of dimers. Mg(2+) is required as a cofactor. The cofactor is K(+).

The protein resides in the cytoplasm. It catalyses the reaction L-methionine + ATP + H2O = S-adenosyl-L-methionine + phosphate + diphosphate. Its pathway is amino-acid biosynthesis; S-adenosyl-L-methionine biosynthesis; S-adenosyl-L-methionine from L-methionine: step 1/1. Catalyzes the formation of S-adenosylmethionine (AdoMet) from methionine and ATP. The overall synthetic reaction is composed of two sequential steps, AdoMet formation and the subsequent tripolyphosphate hydrolysis which occurs prior to release of AdoMet from the enzyme. The chain is S-adenosylmethionine synthase from Ralstonia nicotianae (strain ATCC BAA-1114 / GMI1000) (Ralstonia solanacearum).